Reading from the N-terminus, the 133-residue chain is Protein OPG104 (133 aa).

At 1–111 (MTDEQIYAFC…RYLNQEIRYP (111 aa)) the chain is on the virion surface side. A helical; Signal-anchor transmembrane segment spans residues 112–132 (IIDIKWLPIGLLALAILILAF).

Belongs to the orthopoxvirus OPG104 family. Part of a stable entry-fusion complex (EFC) which is at least composed of proteins OPG143, OPG147, OPG155, OPG086, OPG094, OPG107, OPG104, and OPG099. Formation of the viral membrane is necessary for the assembly of the complex.

It is found in the virion membrane. Envelope protein part of the entry-fusion complex responsible for the virus membrane fusion with host cell membrane during virus entry. Also plays a role in cell-cell fusion (syncytium formation). This is Protein OPG104 (OPG104) from Variola virus (isolate Human/India/Ind3/1967) (VARV).